Reading from the N-terminus, the 101-residue chain is MGTAELKIILEFSAGAELLFGNIKRRQLALDGTKKWNIANLLKWMHANILTERPELFLQGDTVRPGILVLINDTDWELLGELDYELQPNDNVLFISTLHGG.

Gly101 is modified (1-thioglycine). A Glycyl lysine isopeptide (Gly-Lys) (interchain with K-? in acceptor proteins) cross-link involves residue Gly101.

This sequence belongs to the URM1 family. In terms of assembly, interacts with cer. In terms of processing, C-terminal thiocarboxylation occurs in 2 steps, it is first acyl-adenylated (-COAMP) via the hesA/moeB/thiF part of the MOCS3 homolog, then thiocarboxylated (-COSH) via the rhodanese domain of the MOCS3 homolog.

Its subcellular location is the cytoplasm. Its pathway is tRNA modification; 5-methoxycarbonylmethyl-2-thiouridine-tRNA biosynthesis. Its function is as follows. Acts as a sulfur carrier required for 2-thiolation of mcm(5)S(2)U at tRNA wobble positions of cytosolic tRNA(Lys), tRNA(Glu) and tRNA(Gln). Serves as sulfur donor in tRNA 2-thiolation reaction by being thiocarboxylated (-COSH) at its C-terminus by MOCS3. The sulfur is then transferred to tRNA to form 2-thiolation of mcm(5)S(2)U. Also acts as a ubiquitin-like protein (UBL) that is covalently conjugated via an isopeptide bond to lysine residues of target proteins such as Prx2/Jafrac1, Ciao1, Eip71CD and GILT1. The thiocarboxylated form serves as substrate for conjugation and oxidative stress specifically induces the formation of UBL-protein conjugates. In Drosophila ananassae (Fruit fly), this protein is Ubiquitin-related modifier 1 homolog.